A 717-amino-acid chain; its full sequence is DNA-directed RNA polymerase subunit beta' (717 aa).

Positions 71, 73, 91, and 94 each coordinate Zn(2+). Residues aspartate 481, aspartate 483, and aspartate 485 each coordinate Mg(2+).

The protein belongs to the RNA polymerase beta' chain family. RpoC1 subfamily. In plastids the minimal PEP RNA polymerase catalytic core is composed of four subunits: alpha, beta, beta', and beta''. When a (nuclear-encoded) sigma factor is associated with the core the holoenzyme is formed, which can initiate transcription. It depends on Mg(2+) as a cofactor. Zn(2+) is required as a cofactor.

Its subcellular location is the plastid. The protein localises to the chloroplast. The catalysed reaction is RNA(n) + a ribonucleoside 5'-triphosphate = RNA(n+1) + diphosphate. DNA-dependent RNA polymerase catalyzes the transcription of DNA into RNA using the four ribonucleoside triphosphates as substrates. The polypeptide is DNA-directed RNA polymerase subunit beta' (Chlorokybus atmophyticus (Soil alga)).